The primary structure comprises 374 residues: MRIERDLHMATGDGETSYTKNSRIQEKTMFQIKPVLEEATRAVYTALHPQTMVVADLGCSSGPNTLRFVSEVIGIIARHCKEYGRQHDHTQLQFFLNDLPGNDFNNLFQLIQQFNKSTAINHKSEAAEALPPPCYISGLPGSYYTRIFPSESVHLFHSLFCLQWRSEAPEGNKKTCLDIYITKTMSPSMVKLFQQQFQKDFSLFLRLRYEELVSGGQMVLTFIGRKHENVFTGESNHLYGLLAQSLKSLVDEGLVEKEKLESFYLPMYSPSVGEVEAILKQVGLFNMNHVKVFQTNWDPYDDLESDVVHNSIRSGENVAKCLRAVMQPLVASQFGEPILDKLFKEYARRVAKHLENEKTKHAIIVLSIEKAIHL.

Tyr-18 lines the S-adenosyl-L-homocysteine pocket. Gln-25 is an anthranilate binding site. The S-adenosyl-L-homocysteine site is built by Cys-59, Asn-64, Asp-98, Leu-99, Ser-142, and Tyr-143. Residue Trp-164 participates in anthranilate binding. Mg(2+)-binding residues include Glu-261 and Phe-263.

It belongs to the methyltransferase superfamily. Type-7 methyltransferase family. SABATH subfamily.

The catalysed reaction is anthranilate + S-adenosyl-L-methionine = O-methyl anthranilate + S-adenosyl-L-homocysteine. Its function is as follows. Methyltransferase involved in the biosynthesis of methyl anthranilate in response to stresses. Utilizes anthranilic acid as substrate. Produces exclusively the O-methyl ester. In Zea mays (Maize), this protein is Anthranilate O-methyltransferase 2 (AAMT2).